The primary structure comprises 85 residues: MLSFLVSLVVAIVIGLIGSAIVGNRLPGGIFGSMIAGLIGAWIGHGLLGTWGPSLAGFAIFPAIIGAAIFVFLLGLIFRGLRKEA.

3 helical membrane-spanning segments follow: residues 2-22 (LSFL…SAIV), 28-48 (GGIF…HGLL), and 58-78 (FAIF…GLIF).

It belongs to the UPF0410 family.

The protein localises to the cell membrane. This Bacillus subtilis (strain 168) protein is UPF0410 protein YdaS (ydaS).